Here is a 157-residue protein sequence, read N- to C-terminus: Cytochrome b6-f complex subunit 4 (157 aa).

The next 3 membrane-spanning stretches (helical) occupy residues 35–55 (ILYIFPVVILGTISFSLGLGV), 94–114 (LVGVLSLASVPVILVLTAFIE), and 130–150 (LVYLTSTCYALWLGYGSVLGI).

The protein belongs to the cytochrome b family. PetD subfamily. As to quaternary structure, the 4 large subunits of the cytochrome b6-f complex are cytochrome b6, subunit IV (17 kDa polypeptide, petD), cytochrome f and the Rieske protein, while the 4 small subunits are petG, petL, petM and petN. The complex functions as a dimer.

Its subcellular location is the plastid. It localises to the chloroplast thylakoid membrane. Component of the cytochrome b6-f complex, which mediates electron transfer between photosystem II (PSII) and photosystem I (PSI), cyclic electron flow around PSI, and state transitions. This Amphidinium carterae (Dinoflagellate) protein is Cytochrome b6-f complex subunit 4.